Reading from the N-terminus, the 896-residue chain is Vacuolar zinc transporter TgZnT (896 aa).

Over 1–472 (MPFSCFVFSQ…ETGTQRARRK (472 aa)) the chain is Cytoplasmic. Residues 82 to 91 (VLSSRGDESV) show a composition bias toward basic and acidic residues. Disordered regions lie at residues 82 to 104 (VLSS…SPGF), 205 to 227 (MKEI…RPCA), and 255 to 329 (SSSC…SSAS). 2 stretches are compositionally biased toward low complexity: residues 210–225 (SPRS…SSRP) and 255–266 (SSSCCSRSNSSS). Residues 303-322 (VHERRAEATCCAPRDRHGGD) show a composition bias toward basic and acidic residues. The helical transmembrane segment at 473-493 (LVMASMVCCVFMFVEIVAGVL) threads the bilayer. Residues 494 to 502 (ANSLALMTD) are Vacuolar-facing. The helical transmembrane segment at 503–523 (ASHLLSDLCAFLISLFALWVS) threads the bilayer. Topologically, residues 524 to 539 (ELKGNPSMSFGYHRAE) are cytoplasmic. A helical transmembrane segment spans residues 540–560 (ILGALLSVFLIWVLTAVLIYA). Topologically, residues 561–573 (ACFRLVDPPQVDG) are vacuolar. A helical membrane pass occupies residues 574-594 (ELMFWTALLGTLANLFMTHIL). Over 595-737 (KVHSHGIGQV…YENMNLRAAY (143 aa)) the chain is Cytoplasmic. Residues 621 to 707 (LQASSSSPEK…RPFSASSAGS (87 aa)) form a disordered region. Positions 656–680 (RDAEAGRDAEAGRDAEAGRDAETGR) are enriched in basic and acidic residues. The helical transmembrane segment at 738-758 (IHALGDLLQNIGVMIASALIW) threads the bilayer. Residues 759–762 (WRPD) are Vacuolar-facing. Residues 763 to 783 (WAIADPICTFIFSIFVLFTTL) traverse the membrane as a helical segment. The Cytoplasmic segment spans residues 784–896 (SILKEALNVL…CSDPMKVFRR (113 aa)).

It belongs to the cation diffusion facilitator (CDF) transporter (TC 2.A.4) family. SLC30A subfamily.

Its subcellular location is the vacuole membrane. It localises to the cytoplasmic vesicle membrane. In terms of biological role, vacuolar zinc transporter that is probably involved in the transfer of zinc ions from the cytosol to the vacuole for intracellular storage. Plays an essential role in extracellular zinc tolerance. This Toxoplasma gondii (strain ATCC 50853 / GT1) protein is Vacuolar zinc transporter TgZnT.